The sequence spans 288 residues: MTDNTYQPAKVWTWDKSAGGAFANINRPVSGPTHEKTLPVGKHPLQLYSLGTPNGQKVTIMLEELLALGVTGAEYDAWLIRIGDGDQFSSGFVEVNPNSKIPALRDHTHNPPIRVFESGSILLYLAEKFGYFLPQDLAKRTETMNWLFWLQGAAPFLGGGFGHFYHYAPVKIEYAINRFTMEAKRLLDVLDKQLAQHKFVAGDEYTIADMAIWPWFGNVVLGGVYDAAEFLDAGSYKHVQRWAKEVGERPAVKRGRIVNRTNGPLNEQLHERHDASDFETNTEDKRQG.

Residues Asn26, 52-54 (TPN), Gln87, Ile101, 117-118 (ES), Gln151, and Arg178 each bind glutathione. The GST N-terminal domain maps to 46 to 133 (QLYSLGTPNG…YLAEKFGYFL (88 aa)). In terms of domain architecture, GST C-terminal spans 139 to 265 (KRTETMNWLF…RIVNRTNGPL (127 aa)). The segment at 260–288 (RTNGPLNEQLHERHDASDFETNTEDKRQG) is disordered. Basic and acidic residues predominate over residues 268–288 (QLHERHDASDFETNTEDKRQG).

The protein belongs to the GST superfamily. Nu-class GSH transferase family. Homodimer.

In terms of biological role, exhibits a robust glutathione (GSH)-dependent disulfide-bond reductase activity toward the model substrate, 2-hydroxyethyl disulfide; the actual physiological substrates are not known. Also displays a modest GSH-dependent peroxidase activity toward several organic hydroperoxides, such as cumene hydroperoxide and linoleic acid 13(S)-hydroperoxide, but does not reduce H(2)O(2) or tert-butyl hydroperoxide at appreciable rates. Exhibits little or no GSH transferase activity with most typical electrophilic substrates, and has no detectable transferase activity toward 1-chloro-2,4-dinitrobenzene (CDNB) with glutathionylspermidine (GspSH) as the nucleophilic substrate. The protein is Disulfide-bond oxidoreductase YghU (yghU) of Escherichia coli (strain K12).